The primary structure comprises 146 residues: Cystatin-C (146 aa).

Residues 1–26 form the signal peptide; that stretch reads MAGPLRAPLLLLAILAVALALSPAAG. Residue S43 is modified to Phosphoserine. Positions 81–85 match the Secondary area of contact motif; sequence QIVAG. 2 disulfide bridges follow: C99-C109 and C123-C143.

It belongs to the cystatin family.

The protein localises to the secreted. Functionally, as an inhibitor of cysteine proteinases, this protein is thought to serve an important physiological role as a local regulator of this enzyme activity. This is Cystatin-C (CST3) from Saimiri sciureus (Common squirrel monkey).